The following is a 105-amino-acid chain: uncharacterized protein (105 aa).

The chain crosses the membrane as a helical span at residues 64–84 (ILLISIFFLLLFALPQHTMGI).

The protein localises to the membrane. This is an uncharacterized protein from Saccharomyces cerevisiae (strain ATCC 204508 / S288c) (Baker's yeast).